The primary structure comprises 365 residues: Chorismate synthase (365 aa).

The NADP(+) site is built by Arg-48 and Arg-54. Residues Arg-131–Ser-133, Asn-243–Ala-244, Gly-288, Lys-303–Ser-307, and Arg-329 contribute to the FMN site.

This sequence belongs to the chorismate synthase family. As to quaternary structure, homotetramer. The cofactor is FMNH2.

It carries out the reaction 5-O-(1-carboxyvinyl)-3-phosphoshikimate = chorismate + phosphate. It participates in metabolic intermediate biosynthesis; chorismate biosynthesis; chorismate from D-erythrose 4-phosphate and phosphoenolpyruvate: step 7/7. In terms of biological role, catalyzes the anti-1,4-elimination of the C-3 phosphate and the C-6 proR hydrogen from 5-enolpyruvylshikimate-3-phosphate (EPSP) to yield chorismate, which is the branch point compound that serves as the starting substrate for the three terminal pathways of aromatic amino acid biosynthesis. This reaction introduces a second double bond into the aromatic ring system. The chain is Chorismate synthase from Sinorhizobium fredii (strain NBRC 101917 / NGR234).